Reading from the N-terminus, the 175-residue chain is NADH dehydrogenase [ubiquinone] iron-sulfur protein 4, mitochondrial (175 aa).

The N-terminal 42 residues, 1–42 (MAAVSMSVVLRQTLWRRRAVAVAALSVSRVPTRSLRTSTWRL), are a transit peptide targeting the mitochondrion. The segment at 151–175 (KVPKPKSKSYGANFSWNKRTRVSTK) is disordered. Ser173 carries the post-translational modification Phosphoserine; by PKA.

It belongs to the complex I NDUFS4 subunit family. As to quaternary structure, mammalian complex I is composed of 45 different subunits. This is a component of the iron-sulfur (IP) fragment of the enzyme. Interacts with BCAP31 and TOMM40; the interaction mediates its translocation to the mitochondria; the interaction with BCAP31 is direct.

Its subcellular location is the mitochondrion inner membrane. Its function is as follows. Accessory subunit of the mitochondrial membrane respiratory chain NADH dehydrogenase (Complex I), that is believed not to be involved in catalysis. Complex I functions in the transfer of electrons from NADH to the respiratory chain. The immediate electron acceptor for the enzyme is believed to be ubiquinone. The polypeptide is NADH dehydrogenase [ubiquinone] iron-sulfur protein 4, mitochondrial (NDUFS4) (Homo sapiens (Human)).